The chain runs to 156 residues: Lipoprotein signal peptidase (156 aa).

The next 3 helical transmembrane spans lie at 5 to 25, 64 to 84, and 89 to 109; these read FKFI…DQWV, YLHL…KTLL, and IAFG…FIHG. Residues Asp113 and Asp130 contribute to the active site. Residues 122–142 traverse the membrane as a helical segment; sequence NFAIFNVADVMINISVALILI.

This sequence belongs to the peptidase A8 family.

The protein resides in the cell inner membrane. The catalysed reaction is Release of signal peptides from bacterial membrane prolipoproteins. Hydrolyzes -Xaa-Yaa-Zaa-|-(S,diacylglyceryl)Cys-, in which Xaa is hydrophobic (preferably Leu), and Yaa (Ala or Ser) and Zaa (Gly or Ala) have small, neutral side chains.. It participates in protein modification; lipoprotein biosynthesis (signal peptide cleavage). Functionally, this protein specifically catalyzes the removal of signal peptides from prolipoproteins. The protein is Lipoprotein signal peptidase of Campylobacter jejuni subsp. jejuni serotype O:23/36 (strain 81-176).